The following is a 538-amino-acid chain: Chaperonin GroEL (538 aa).

ATP is bound by residues 29-32 (TLGP), 86-90 (DGTTT), Gly413, 477-479 (NAA), and Asp493.

This sequence belongs to the chaperonin (HSP60) family. As to quaternary structure, forms a cylinder of 14 subunits composed of two heptameric rings stacked back-to-back. Interacts with the co-chaperonin GroES.

It localises to the cytoplasm. The enzyme catalyses ATP + H2O + a folded polypeptide = ADP + phosphate + an unfolded polypeptide.. In terms of biological role, together with its co-chaperonin GroES, plays an essential role in assisting protein folding. The GroEL-GroES system forms a nano-cage that allows encapsulation of the non-native substrate proteins and provides a physical environment optimized to promote and accelerate protein folding. This is Chaperonin GroEL from Bifidobacterium adolescentis (strain ATCC 15703 / DSM 20083 / NCTC 11814 / E194a).